The following is a 105-amino-acid chain: Large ribosomal subunit protein uL24 (105 aa).

The protein belongs to the universal ribosomal protein uL24 family. As to quaternary structure, part of the 50S ribosomal subunit.

One of two assembly initiator proteins, it binds directly to the 5'-end of the 23S rRNA, where it nucleates assembly of the 50S subunit. Functionally, one of the proteins that surrounds the polypeptide exit tunnel on the outside of the subunit. The sequence is that of Large ribosomal subunit protein uL24 from Thermotoga petrophila (strain ATCC BAA-488 / DSM 13995 / JCM 10881 / RKU-1).